We begin with the raw amino-acid sequence, 517 residues long: MLDINALKEIPPATAVGAAVAVGALYFFCQCFYNLYLHPLRKIPGPKLAAIGPYLEFYHEVLRDGQYLWEIEKMHQKYGPIVRVNAREVHVKDTSYYNTIYTAGARKTNKDPATVGAFDVPTATAATVDHDLHRARRGYLNPYFSKRAVAGLEPTIHERITKLLSRFDQHRKDDQVLSLDGAFSALTADVITARFYGEHKDYLDVPDFHFVVRDGFQGLSRVYHLGRFLPSVVGALKGLPKFLIRIIFPPIAELLTMREEIEAGGIDEFTKSKSSGIKSSVLVGALSDPHIPPQERTVARMLDEGTVFLFAGTETTSRTLGITMFYLLSNPDILNKLREELKSLPPSDDNMHSLGQLENLPYLTGVVHEGLRLSFGPISRSSRVATHEALQYKEHTIPAGTPVSQSTYFVHTDTEIFPDPWEFKPERWIKAAEDGVALKKYITNFSQGSRQCIGYSMSFAEMFLTLSRIIPAFDLELYDTTKADIDMTHARIVGYPKKVPGKTESLGELRVKVIKKL.

The chain crosses the membrane as a helical span at residues 15 to 37 (AVGAAVAVGALYFFCQCFYNLYL). A glycan (N-linked (GlcNAc...) asparagine) is linked at Asn444. Heme is bound at residue Cys452.

Belongs to the cytochrome P450 family. It depends on heme as a cofactor.

The protein resides in the membrane. The protein operates within sesquiterpene biosynthesis; trichothecene biosynthesis. Its function is as follows. Cytochrome P450 monooxygenase; part of the gene cluster that mediates the production of the antimicrobial trichothecene harzianum A (HA) that plays a role in Botrytis cinerea antagonistic activity and plant defense priming. The biosynthesis of harzianum A begins with the cyclization of farnesyl diphosphate to trichodiene and is catalyzed by the trichodiene synthase TRI5. Trichodiene undergoes a series of oxygenations catalyzed by the cytochrome P450 monooxygenase TRI4. TRI4 controls the addition of 3 oxygens at C-2, C-11, and the C-12, C-13-epoxide to form the intermediate isotrichodiol. Isotrichodiol then undergoes a non-enzymatic isomerization and cyclization to form 12,13-epoxytrichothec-9-ene (EPT) which is further converted to trichodermol by the cytochrome P450 monooxygenase TRI11 via C-4 hydroxylation. The last step of HA synthesis is esterification of an octatriendioyl moiety to the C-4 oxygen of trichodermol. The octatriendioyl moiety is probably produced by the polyketide synthase TRI17 and the esterification performed by the trichothecene O-acetyltransferase TRI3. The sequence is that of Cytochrome P450 monooxygenase TRI4 from Trichoderma arundinaceum.